The sequence spans 227 residues: dTTP/UTP pyrophosphatase (227 aa).

The active-site Proton acceptor is Asp98.

It belongs to the Maf family. YhdE subfamily. The cofactor is a divalent metal cation.

The protein localises to the cytoplasm. The enzyme catalyses dTTP + H2O = dTMP + diphosphate + H(+). It carries out the reaction UTP + H2O = UMP + diphosphate + H(+). Its function is as follows. Nucleoside triphosphate pyrophosphatase that hydrolyzes dTTP and UTP. May have a dual role in cell division arrest and in preventing the incorporation of modified nucleotides into cellular nucleic acids. This Bartonella quintana (strain Toulouse) (Rochalimaea quintana) protein is dTTP/UTP pyrophosphatase.